A 1047-amino-acid chain; its full sequence is tRNA wybutosine-synthesizing protein 4 (1047 aa).

S-adenosyl-L-methionine contacts are provided by residues arginine 69, glycine 95, aspartate 122, 169–170 (DL), and glutamate 196. A JmjC domain is found at 814 to 1003 (GRQYLRSISA…AAGRDVYGNR (190 aa)).

The protein belongs to the methyltransferase superfamily. LCMT family.

The catalysed reaction is 7-[(3S)-3-amino-3-carboxypropyl]wyosine(37) in tRNA(Phe) + S-adenosyl-L-methionine = 7-[(3S)-(3-amino-3-methoxycarbonyl)propyl]wyosine(37) in tRNA(Phe) + S-adenosyl-L-homocysteine. The enzyme catalyses 7-[(3S)-(3-amino-3-methoxycarbonyl)propyl]wyosine(37) in tRNA(Phe) + S-adenosyl-L-methionine + CO2 = wybutosine(37) in tRNA(Phe) + S-adenosyl-L-homocysteine + 2 H(+). It functions in the pathway tRNA modification; wybutosine-tRNA(Phe) biosynthesis. In terms of biological role, probable S-adenosyl-L-methionine-dependent methyltransferase that acts as a component of the wybutosine biosynthesis pathway. Wybutosine is a hyper modified guanosine with a tricyclic base found at the 3'-position adjacent to the anticodon of eukaryotic phenylalanine tRNA. May methylate the carboxyl group of leucine residues to form alpha-leucine ester residues. The polypeptide is tRNA wybutosine-synthesizing protein 4 (ppm2) (Aspergillus fumigatus (strain ATCC MYA-4609 / CBS 101355 / FGSC A1100 / Af293) (Neosartorya fumigata)).